We begin with the raw amino-acid sequence, 945 residues long: Leucine--tRNA ligase (945 aa).

The short motif at 43–53 is the 'HIGH' region element; it reads PYPNGAIHIGH. The 'KMSKS' region signature appears at 638 to 642; that stretch reads KMSKS. ATP is bound at residue K641.

Belongs to the class-I aminoacyl-tRNA synthetase family.

It localises to the cytoplasm. The catalysed reaction is tRNA(Leu) + L-leucine + ATP = L-leucyl-tRNA(Leu) + AMP + diphosphate. This chain is Leucine--tRNA ligase, found in Pyrobaculum neutrophilum (strain DSM 2338 / JCM 9278 / NBRC 100436 / V24Sta) (Thermoproteus neutrophilus).